The following is a 700-amino-acid chain: Elongation factor G (700 aa).

Positions 8 to 290 (ERYRNIGISA…AVVEYLPSPV (283 aa)) constitute a tr-type G domain. GTP-binding positions include 17-24 (AHIDAGKT), 88-92 (DTPGH), and 142-145 (NKMD).

The protein belongs to the TRAFAC class translation factor GTPase superfamily. Classic translation factor GTPase family. EF-G/EF-2 subfamily.

The protein localises to the cytoplasm. Catalyzes the GTP-dependent ribosomal translocation step during translation elongation. During this step, the ribosome changes from the pre-translocational (PRE) to the post-translocational (POST) state as the newly formed A-site-bound peptidyl-tRNA and P-site-bound deacylated tRNA move to the P and E sites, respectively. Catalyzes the coordinated movement of the two tRNA molecules, the mRNA and conformational changes in the ribosome. In Mannheimia succiniciproducens (strain KCTC 0769BP / MBEL55E), this protein is Elongation factor G.